The following is a 150-amino-acid chain: SsrA-binding protein (150 aa).

It belongs to the SmpB family.

It localises to the cytoplasm. Its function is as follows. Required for rescue of stalled ribosomes mediated by trans-translation. Binds to transfer-messenger RNA (tmRNA), required for stable association of tmRNA with ribosomes. tmRNA and SmpB together mimic tRNA shape, replacing the anticodon stem-loop with SmpB. tmRNA is encoded by the ssrA gene; the 2 termini fold to resemble tRNA(Ala) and it encodes a 'tag peptide', a short internal open reading frame. During trans-translation Ala-aminoacylated tmRNA acts like a tRNA, entering the A-site of stalled ribosomes, displacing the stalled mRNA. The ribosome then switches to translate the ORF on the tmRNA; the nascent peptide is terminated with the 'tag peptide' encoded by the tmRNA and targeted for degradation. The ribosome is freed to recommence translation, which seems to be the essential function of trans-translation. This is SsrA-binding protein from Campylobacter jejuni subsp. doylei (strain ATCC BAA-1458 / RM4099 / 269.97).